Consider the following 847-residue polypeptide: MDFKEYRQRGKEMVDYIADYLENIRERRVFPDVSPGYMRQLLPESAPIEGEPWPKIFSDVERIVMPGITHWQSPHMHAYFPALNSMPSLLGDMLADAINCLGFTWASSPACTELEIIVMNWLGKMIGLPDAFLHLSSQSQGGGVLQTTASEATLVCLLAGRTRAIQRFHERHPGYQDAEINARLVAYCSDQAHSSVEKAALIGLVRMRYIEADDDLAMRGKLLREAIEDDIKQGLVPFWVCATLGTTGSCSFDNLEEIGIVCAEHHLWLHVDAAYAGSAFICPEFRTWLRGIERADSIAFNPSKWLMVHFDATALWVRDSTAVHRTFNVEPLYLQHENSGVAVDFMHWQIPLSRRFRALKVWFVLRSYGIKGLQRHIREGVRLAQKFEALVLADHRFELPAKRHLGLVVFRIRGDNEITEKLLKRLNHRGNLHCIPSSLKGQYVIRFTITSTHTTLDDIVKDWMEIRQVASTVLEEMNITISNRVYLKETKEKNEAFGSSLLLSNSPLSPKVVNGSFAAIFDADEFLAKTYAGVRIAHQESPSMRRRVRGILMSGKQFSLDSHMDVVVQTTLDAGNGATRTSTTNSYGHTTSAAQANSERQASIQEDNEESPEETELLSLCRTSNVPSPEHAHSLSTPSRSCSSSSHSLIHSLTQSSPRSSPVNQFRPITLCAVPSQSQLSMPLAMPLPNRNVTVSVDSLLNPVTTCNVYHGKRFLEPLENLAQTSASFSSSIFRLPTPIATPTRESPEDPDWPAKTFSQLLLERYSSQSQSLGNNSSTESSSLSGGATPTPTPMSSLDELVTPLLLSFASPSQPMLSAHGIGEGQREQGSDSDATVCSTTSSMESL.

Substrate contacts are provided by Phe80 and His193. Lys304 carries the post-translational modification N6-(pyridoxal phosphate)lysine. Polar residues predominate over residues 575–605 (GNGATRTSTTNSYGHTTSAAQANSERQASIQ). Disordered stretches follow at residues 575 to 662 (GNGA…RSSP), 769 to 798 (QSQS…MSSL), and 813 to 847 (SQPM…MESL). The span at 606-616 (EDNEESPEETE) shows a compositional bias: acidic residues. 2 stretches are compositionally biased toward low complexity: residues 634–657 (SLST…TQSS) and 769–787 (QSQS…LSGG). Positions 832 to 847 (DSDATVCSTTSSMESL) are enriched in polar residues.

It belongs to the group II decarboxylase family. Homodimer. Pyridoxal 5'-phosphate serves as cofactor. Localized primarily to the photoreceptors, in the eye.

It carries out the reaction L-histidine + H(+) = histamine + CO2. Required in photoreceptor transmitter synthesis. Catlayzes the conversion of L-histidine to histamine. This Drosophila melanogaster (Fruit fly) protein is Histidine decarboxylase (Hdc).